The following is a 603-amino-acid chain: DNA mismatch repair protein MutL (603 aa).

Belongs to the DNA mismatch repair MutL/HexB family.

Its function is as follows. This protein is involved in the repair of mismatches in DNA. It is required for dam-dependent methyl-directed DNA mismatch repair. May act as a 'molecular matchmaker', a protein that promotes the formation of a stable complex between two or more DNA-binding proteins in an ATP-dependent manner without itself being part of a final effector complex. This chain is DNA mismatch repair protein MutL, found in Nitrobacter winogradskyi (strain ATCC 25391 / DSM 10237 / CIP 104748 / NCIMB 11846 / Nb-255).